Here is a 459-residue protein sequence, read N- to C-terminus: Chromosomal replication initiator protein DnaA (459 aa).

The tract at residues 1 to 90 (MAVSLWQQCI…RPASKPAAPA (90 aa)) is domain I, interacts with DnaA modulators. A disordered region spans residues 75–124 (RFDIGSRPASKPAAPAASTKSPVAPAAKSPSKPSFNSNEPAATANHRSNM). Positions 80-108 (SRPASKPAAPAASTKSPVAPAAKSPSKPS) are enriched in low complexity. The tract at residues 91-122 (ASTKSPVAPAAKSPSKPSFNSNEPAATANHRS) is domain II. The segment covering 109–124 (FNSNEPAATANHRSNM) has biased composition (polar residues). The domain III, AAA+ region stretch occupies residues 123–339 (NMNPTYQFDN…GALNRVIANA (217 aa)). ATP is bound by residues Gly167, Gly169, Lys170, and Thr171. The segment at 340 to 459 (NFTGRPITID…YANLIRTLSS (120 aa)) is domain IV, binds dsDNA.

This sequence belongs to the DnaA family. As to quaternary structure, oligomerizes as a right-handed, spiral filament on DNA at oriC.

It is found in the cytoplasm. In terms of biological role, plays an essential role in the initiation and regulation of chromosomal replication. ATP-DnaA binds to the origin of replication (oriC) to initiate formation of the DNA replication initiation complex once per cell cycle. Binds the DnaA box (a 9 base pair repeat at the origin) and separates the double-stranded (ds)DNA. Forms a right-handed helical filament on oriC DNA; dsDNA binds to the exterior of the filament while single-stranded (ss)DNA is stabiized in the filament's interior. The ATP-DnaA-oriC complex binds and stabilizes one strand of the AT-rich DNA unwinding element (DUE), permitting loading of DNA polymerase. After initiation quickly degrades to an ADP-DnaA complex that is not apt for DNA replication. Binds acidic phospholipids. This chain is Chromosomal replication initiator protein DnaA, found in Shewanella loihica (strain ATCC BAA-1088 / PV-4).